Here is a 590-residue protein sequence, read N- to C-terminus: Aspartate--tRNA(Asp/Asn) ligase (590 aa).

E172 serves as a coordination point for L-aspartate. An aspartate region spans residues 196–199; the sequence is QLFK. R218 serves as a coordination point for L-aspartate. ATP-binding positions include 218-220 and Q227; that span reads RDE. H449 lines the L-aspartate pocket. Position 484 (E484) interacts with ATP. Residue R491 participates in L-aspartate binding. 536–539 contributes to the ATP binding site; the sequence is GVDR.

The protein belongs to the class-II aminoacyl-tRNA synthetase family. Type 1 subfamily. In terms of assembly, homodimer.

It is found in the cytoplasm. It carries out the reaction tRNA(Asx) + L-aspartate + ATP = L-aspartyl-tRNA(Asx) + AMP + diphosphate. Functionally, aspartyl-tRNA synthetase with relaxed tRNA specificity since it is able to aspartylate not only its cognate tRNA(Asp) but also tRNA(Asn). Reaction proceeds in two steps: L-aspartate is first activated by ATP to form Asp-AMP and then transferred to the acceptor end of tRNA(Asp/Asn). The polypeptide is Aspartate--tRNA(Asp/Asn) ligase (Francisella tularensis subsp. tularensis (strain WY96-3418)).